The sequence spans 256 residues: uncharacterized protein (256 aa).

This is an uncharacterized protein from Saccharomyces cerevisiae (strain ATCC 204508 / S288c) (Baker's yeast).